A 72-amino-acid polypeptide reads, in one-letter code: Translation initiation factor IF-1 (72 aa).

The region spanning 1-72 (MSKQDVIEVE…TRGRIVYRYK (72 aa)) is the S1-like domain.

Belongs to the IF-1 family. Component of the 30S ribosomal translation pre-initiation complex which assembles on the 30S ribosome in the order IF-2 and IF-3, IF-1 and N-formylmethionyl-tRNA(fMet); mRNA recruitment can occur at any time during PIC assembly.

It localises to the cytoplasm. In terms of biological role, one of the essential components for the initiation of protein synthesis. Stabilizes the binding of IF-2 and IF-3 on the 30S subunit to which N-formylmethionyl-tRNA(fMet) subsequently binds. Helps modulate mRNA selection, yielding the 30S pre-initiation complex (PIC). Upon addition of the 50S ribosomal subunit IF-1, IF-2 and IF-3 are released leaving the mature 70S translation initiation complex. This Pelotomaculum thermopropionicum (strain DSM 13744 / JCM 10971 / SI) protein is Translation initiation factor IF-1.